The sequence spans 373 residues: Indole glucosinolate O-methyltransferase 1 (373 aa).

S-adenosyl-L-homocysteine-binding residues include G217, D240, D260, M261, and K274. H278 functions as the Proton acceptor in the catalytic mechanism.

It belongs to the class I-like SAM-binding methyltransferase superfamily. Cation-independent O-methyltransferase family. In terms of assembly, interacts with B'GAMMA.

It functions in the pathway secondary metabolite biosynthesis. In terms of biological role, involved in indole glucosinolate biosynthesis. Catalyzes methoxylation reactions of the glucosinolate indole ring. Converts the hydroxy intermediates 4-hydroxy-indol-3-yl-methylglucosinolate (4OH-I3M) and 1-hydroxy-indol-3-yl-methylglucosinolate (1OH-I3M) to 4-methoxy-indol-3-yl-methylglucosinolate (4MO-I3M) and 1-methoxy-indol-3-yl-methylglucosinolate (1MO-I3M), respectively. This Arabidopsis thaliana (Mouse-ear cress) protein is Indole glucosinolate O-methyltransferase 1.